The primary structure comprises 301 residues: Protoheme IX farnesyltransferase (301 aa).

9 helical membrane-spanning segments follow: residues Phe-20–Leu-42, Val-55–Phe-75, Ala-105–Trp-125, Gln-126–Ala-146, Leu-150–Val-172, Phe-176–Ile-198, Met-227–Val-247, Val-249–Met-269, and Phe-280–Phe-300.

Belongs to the UbiA prenyltransferase family. Protoheme IX farnesyltransferase subfamily. As to quaternary structure, interacts with CtaA.

It localises to the cell membrane. The catalysed reaction is heme b + (2E,6E)-farnesyl diphosphate + H2O = Fe(II)-heme o + diphosphate. It participates in porphyrin-containing compound metabolism; heme O biosynthesis; heme O from protoheme: step 1/1. Its function is as follows. Converts heme B (protoheme IX) to heme O by substitution of the vinyl group on carbon 2 of heme B porphyrin ring with a hydroxyethyl farnesyl side group. The sequence is that of Protoheme IX farnesyltransferase from Listeria monocytogenes serotype 4b (strain CLIP80459).